Consider the following 373-residue polypeptide: Carnosine N-methyltransferase (373 aa).

The S-adenosyl-L-methionine site is built by glutamine 110, arginine 113, glycine 154, glutamate 175, aspartate 242, phenylalanine 243, and cysteine 262. Aspartate 266 is a carnosine binding site. Tyrosine 274 contacts S-adenosyl-L-methionine. Histidine 297 and tyrosine 356 together coordinate carnosine.

This sequence belongs to the carnosine N-methyltransferase family.

Its subcellular location is the cytoplasm. It localises to the nucleus. It carries out the reaction carnosine + S-adenosyl-L-methionine = anserine + S-adenosyl-L-homocysteine + H(+). N-methyltransferase that mediates the formation of anserine (beta-alanyl-N(Pi)-methyl-L-histidine) from carnosine. Also methylates other L-histidine-containing di- and tripeptides such as Gly-Gly-His, Gly-His and homocarnosine (GABA-His). This Schizosaccharomyces pombe (strain 972 / ATCC 24843) (Fission yeast) protein is Carnosine N-methyltransferase.